The following is a 146-amino-acid chain: Transcriptional regulator MraZ (146 aa).

2 SpoVT-AbrB domains span residues 9–55 and 81–124; these read ASAL…PRPA and AMDV…DVQR.

It belongs to the MraZ family. As to quaternary structure, forms oligomers.

Its subcellular location is the cytoplasm. The protein localises to the nucleoid. The chain is Transcriptional regulator MraZ from Methylibium petroleiphilum (strain ATCC BAA-1232 / LMG 22953 / PM1).